Here is a 342-residue protein sequence, read N- to C-terminus: Glycerol-1-phosphate dehydrogenase [NAD(P)+] (342 aa).

NAD(+)-binding positions include 84–88 and 106–109; these read GRPID and TAAS. Asp-111 is a substrate binding site. An NAD(+)-binding site is contributed by Ser-115. Asp-160 is a binding site for substrate. Residues Asp-160 and His-241 each coordinate Zn(2+). Residue His-245 coordinates substrate. His-260 is a binding site for Zn(2+).

The protein belongs to the glycerol-1-phosphate dehydrogenase family. As to quaternary structure, homodimer. Requires Zn(2+) as cofactor.

Its subcellular location is the cytoplasm. The enzyme catalyses sn-glycerol 1-phosphate + NAD(+) = dihydroxyacetone phosphate + NADH + H(+). It catalyses the reaction sn-glycerol 1-phosphate + NADP(+) = dihydroxyacetone phosphate + NADPH + H(+). The protein operates within membrane lipid metabolism; glycerophospholipid metabolism. Catalyzes the NAD(P)H-dependent reduction of dihydroxyacetonephosphate (DHAP or glycerone phosphate) to glycerol 1-phosphate (G1P). The G1P thus generated is used as the glycerophosphate backbone of phospholipids in the cellular membranes of Archaea. This Pyrobaculum aerophilum (strain ATCC 51768 / DSM 7523 / JCM 9630 / CIP 104966 / NBRC 100827 / IM2) protein is Glycerol-1-phosphate dehydrogenase [NAD(P)+].